The chain runs to 349 residues: tRNA pseudouridine synthase D (349 aa).

Residue Phe-27 participates in substrate binding. Asp-80 functions as the Nucleophile in the catalytic mechanism. Asn-129 provides a ligand contact to substrate. Positions 155–303 (GVPNYFGAQR…VEAARRAMLL (149 aa)) constitute a TRUD domain. Position 329 (Phe-329) interacts with substrate.

The protein belongs to the pseudouridine synthase TruD family.

It catalyses the reaction uridine(13) in tRNA = pseudouridine(13) in tRNA. In terms of biological role, responsible for synthesis of pseudouridine from uracil-13 in transfer RNAs. In Escherichia coli O8 (strain IAI1), this protein is tRNA pseudouridine synthase D.